Consider the following 118-residue polypeptide: Ribosome-binding factor A (118 aa).

Belongs to the RbfA family. As to quaternary structure, monomer. Binds 30S ribosomal subunits, but not 50S ribosomal subunits or 70S ribosomes.

It is found in the cytoplasm. Functionally, one of several proteins that assist in the late maturation steps of the functional core of the 30S ribosomal subunit. Associates with free 30S ribosomal subunits (but not with 30S subunits that are part of 70S ribosomes or polysomes). Required for efficient processing of 16S rRNA. May interact with the 5'-terminal helix region of 16S rRNA. This is Ribosome-binding factor A from Geobacter metallireducens (strain ATCC 53774 / DSM 7210 / GS-15).